Reading from the N-terminus, the 387-residue chain is MNAKTDFSGYEVGYDIPALPGMDESEIQTPCLILDLDALERNIRKMGDYAKAHGMRHRSHGKMHKSVDVQKLQESLGGSVGVCCQKVSEAEAFARGGIKDVLVTNEVREPAKIDRLARLPKTGATVTVCVDDVQNIADLSAAAQKHGTELGIFVEIDCGAGRCGVTTKEAVVEIAKAAAAAPNLTFKGIQAYQGAMQHMDSFEDRKAKLDAAIAQVKEAVDALEAEGLAPEFVSGGGTGSYYFESNSGIYNELQCGSYAFMDADYGRIHDAEGKRIDQGEWENALFILTSVMSHAKPHLAVVDAGLKAQSVDSGLPFVYGRDDVKYIKCSDEHGVVEDKDGVLKVNDKLRLVPGHCDPTCNVHDWYVGVRNGKVETVWPVSARGKGY.

Lys62 is modified (N6-(pyridoxal phosphate)lysine). Pyridoxal 5'-phosphate contacts are provided by residues Gln85, Thr238, Gly256–Ser257, and Tyr265. The Mg(2+) site is built by His355 and Asp357.

Belongs to the DSD1 family. Homodimer. It depends on pyridoxal 5'-phosphate as a cofactor. Mg(2+) serves as cofactor.

It catalyses the reaction (3S)-3-hydroxy-D-aspartate = glyoxylate + glycine. It carries out the reaction (3R)-3-hydroxy-D-aspartate = glyoxylate + glycine. In terms of biological role, catalyzes the condensation of glyoxylate and glycine into (2R,3S)-beta-hydroxyaspartate ((3S)-3-hydroxy-D-aspartate). Is essential for the growth of P.denitrificans in the presence of glycolate and glyoxylate since it functions in glyoxylate assimilation via the beta-hydroxyaspartate cycle (BHAC). Is also able to catalyze the reverse reaction in vitro, i.e. the cleavage of (3S)-3-hydroxy-D-aspartate, and that of D-threonine to a lesser extent. The sequence is that of 3-hydroxy-D-aspartate aldolase from Paracoccus denitrificans (strain Pd 1222).